A 362-amino-acid polypeptide reads, in one-letter code: Methylthioribose-1-phosphate isomerase (362 aa).

Substrate contacts are provided by residues 53 to 55 (RGA), Arg90, and Gln201. Catalysis depends on Asp241, which acts as the Proton donor. 251 to 252 (NK) provides a ligand contact to substrate.

It belongs to the eIF-2B alpha/beta/delta subunits family. MtnA subfamily.

The enzyme catalyses 5-(methylsulfanyl)-alpha-D-ribose 1-phosphate = 5-(methylsulfanyl)-D-ribulose 1-phosphate. The protein operates within amino-acid biosynthesis; L-methionine biosynthesis via salvage pathway; L-methionine from S-methyl-5-thio-alpha-D-ribose 1-phosphate: step 1/6. Functionally, catalyzes the interconversion of methylthioribose-1-phosphate (MTR-1-P) into methylthioribulose-1-phosphate (MTRu-1-P). In Dechloromonas aromatica (strain RCB), this protein is Methylthioribose-1-phosphate isomerase.